Reading from the N-terminus, the 79-residue chain is Exodeoxyribonuclease 7 small subunit (79 aa).

It belongs to the XseB family. Heterooligomer composed of large and small subunits.

The protein localises to the cytoplasm. It catalyses the reaction Exonucleolytic cleavage in either 5'- to 3'- or 3'- to 5'-direction to yield nucleoside 5'-phosphates.. In terms of biological role, bidirectionally degrades single-stranded DNA into large acid-insoluble oligonucleotides, which are then degraded further into small acid-soluble oligonucleotides. The sequence is that of Exodeoxyribonuclease 7 small subunit from Syntrophus aciditrophicus (strain SB).